Here is a 57-residue protein sequence, read N- to C-terminus: Potassium channel toxin MeuTXKalpha2 (57 aa).

An N-terminal signal peptide occupies residues 1 to 19 (MSRLYAIILIALVFNVIMT). The propeptide occupies 20–28 (IMPDMKVEA). Disulfide bonds link cysteine 31-cysteine 47, cysteine 34-cysteine 52, and cysteine 38-cysteine 54.

This sequence belongs to the short scorpion toxin superfamily. Potassium channel inhibitor family. Alpha-KTx 08 subfamily. As to expression, expressed by the venom gland.

The protein localises to the secreted. Inhibits Kv1.1/KCNA1, Kv1.3/KCNA3 and Shaker potassium channels. In Mesobuthus eupeus (Lesser Asian scorpion), this protein is Potassium channel toxin MeuTXKalpha2.